The chain runs to 2211 residues: Activating signal cointegrator 1 complex subunit 3 (2211 aa).

In terms of domain architecture, Helicase ATP-binding 1 spans 495-678; the sequence is ETAYNTNENM…FLHVNPYIGL (184 aa). 508 to 515 provides a ligand contact to ATP; it reads APTGAGKT. A DEVH box motif is present at residues 620 to 623; that stretch reads DEVH. The Helicase C-terminal 1 domain maps to 717 to 923; sequence VLKQIMAGHQ…GTVTNVEEAV (207 aa). An SEC63 1 domain is found at 987–1296; sequence STDLGRTASH…GAEAVCIINF (310 aa). The region spanning 1345–1520 is the Helicase ATP-binding 2 domain; it reads HTLYHTDCNV…WLNINQMGLF (176 aa). An ATP-binding site is contributed by 1358–1365; that stretch reads APTGSGKT. Residues 1462–1465 carry the DEIH box motif; sequence DEIH. The 208-residue stretch at 1553-1760 folds into the Helicase C-terminal 2 domain; that stretch reads PAFQAIRSHS…GTITSKQDAM (208 aa). In terms of domain architecture, SEC63 2 spans 1821–2184; it reads PLTYGRIASY…YLGMDQQYDI (364 aa).

It belongs to the helicase family.

Its subcellular location is the nucleus. It is found in the nucleus speckle. The protein localises to the cytoplasm. It localises to the cytosol. The enzyme catalyses Couples ATP hydrolysis with the unwinding of duplex DNA by translocating in the 3'-5' direction.. It catalyses the reaction ATP + H2O = ADP + phosphate + H(+). Its function is as follows. 3'-5' DNA helicase involved in repair of alkylated DNA. Promotes DNA unwinding to generate single-stranded substrate needed for ALKBH3, enabling ALKBH3 to process alkylated N3-methylcytosine (3mC) within double-stranded regions. Also involved in activation of the ribosome quality control (RQC) pathway, a pathway that degrades nascent peptide chains during problematic translation. Drives the splitting of stalled ribosomes. This is Activating signal cointegrator 1 complex subunit 3 (ascc3) from Gallus gallus (Chicken).